The primary structure comprises 430 residues: Glutamate-1-semialdehyde 2,1-aminomutase 2 (430 aa).

Lysine 268 carries the N6-(pyridoxal phosphate)lysine modification.

Belongs to the class-III pyridoxal-phosphate-dependent aminotransferase family. HemL subfamily. Homodimer. The cofactor is pyridoxal 5'-phosphate.

Its subcellular location is the cytoplasm. The enzyme catalyses (S)-4-amino-5-oxopentanoate = 5-aminolevulinate. It functions in the pathway porphyrin-containing compound metabolism; protoporphyrin-IX biosynthesis; 5-aminolevulinate from L-glutamyl-tRNA(Glu): step 2/2. The sequence is that of Glutamate-1-semialdehyde 2,1-aminomutase 2 from Shouchella clausii (strain KSM-K16) (Alkalihalobacillus clausii).